A 144-amino-acid polypeptide reads, in one-letter code: 3-hydroxyacyl-[acyl-carrier-protein] dehydratase FabZ (144 aa).

Residue histidine 47 is part of the active site.

Belongs to the thioester dehydratase family. FabZ subfamily.

Its subcellular location is the cytoplasm. It carries out the reaction a (3R)-hydroxyacyl-[ACP] = a (2E)-enoyl-[ACP] + H2O. Its function is as follows. Involved in unsaturated fatty acids biosynthesis. Catalyzes the dehydration of short chain beta-hydroxyacyl-ACPs and long chain saturated and unsaturated beta-hydroxyacyl-ACPs. In Nitrosomonas eutropha (strain DSM 101675 / C91 / Nm57), this protein is 3-hydroxyacyl-[acyl-carrier-protein] dehydratase FabZ.